A 1073-amino-acid polypeptide reads, in one-letter code: Carbamoyl phosphate synthase large chain (1073 aa).

Residues 1–403 (MPKRTDIKSI…SLQKALRGLE (403 aa)) form a carboxyphosphate synthetic domain region. 12 residues coordinate ATP: arginine 129, arginine 169, glycine 175, glycine 176, glutamate 208, leucine 210, glutamate 215, glycine 241, valine 242, histidine 243, glutamine 285, and glutamate 299. An ATP-grasp 1 domain is found at 133–328 (DKAMKSIGLA…IARVAAKLAV (196 aa)). Mg(2+)-binding residues include glutamine 285, glutamate 299, and asparagine 301. Positions 285, 299, and 301 each coordinate Mn(2+). The interval 404 to 553 (VGVCGLDPKL…YSTYEEECEA (150 aa)) is oligomerization domain. A carbamoyl phosphate synthetic domain region spans residues 554-935 (NPSTRDKIMI…AFAKAQMGAS (382 aa)). Residues 678–869 (QQMVERLNLR…LAMIAARVMA (192 aa)) form the ATP-grasp 2 domain. Residues arginine 714, histidine 753, leucine 755, glutamate 760, glycine 785, valine 786, histidine 787, serine 788, glutamine 828, and glutamate 840 each contribute to the ATP site. The Mg(2+) site is built by glutamine 828, glutamate 840, and asparagine 842. Residues glutamine 828, glutamate 840, and asparagine 842 each contribute to the Mn(2+) site. Positions 936–1073 (EVLPTGGTAF…LQDLHAGLKA (138 aa)) constitute an MGS-like domain. An allosteric domain region spans residues 936–1073 (EVLPTGGTAF…LQDLHAGLKA (138 aa)).

This sequence belongs to the CarB family. As to quaternary structure, composed of two chains; the small (or glutamine) chain promotes the hydrolysis of glutamine to ammonia, which is used by the large (or ammonia) chain to synthesize carbamoyl phosphate. Tetramer of heterodimers (alpha,beta)4. Mg(2+) is required as a cofactor. The cofactor is Mn(2+).

It carries out the reaction hydrogencarbonate + L-glutamine + 2 ATP + H2O = carbamoyl phosphate + L-glutamate + 2 ADP + phosphate + 2 H(+). The enzyme catalyses hydrogencarbonate + NH4(+) + 2 ATP = carbamoyl phosphate + 2 ADP + phosphate + 2 H(+). The protein operates within amino-acid biosynthesis; L-arginine biosynthesis; carbamoyl phosphate from bicarbonate: step 1/1. It functions in the pathway pyrimidine metabolism; UMP biosynthesis via de novo pathway; (S)-dihydroorotate from bicarbonate: step 1/3. Large subunit of the glutamine-dependent carbamoyl phosphate synthetase (CPSase). CPSase catalyzes the formation of carbamoyl phosphate from the ammonia moiety of glutamine, carbonate, and phosphate donated by ATP, constituting the first step of 2 biosynthetic pathways, one leading to arginine and/or urea and the other to pyrimidine nucleotides. The large subunit (synthetase) binds the substrates ammonia (free or transferred from glutamine from the small subunit), hydrogencarbonate and ATP and carries out an ATP-coupled ligase reaction, activating hydrogencarbonate by forming carboxy phosphate which reacts with ammonia to form carbamoyl phosphate. The protein is Carbamoyl phosphate synthase large chain of Pseudomonas syringae pv. tomato (strain ATCC BAA-871 / DC3000).